A 325-amino-acid chain; its full sequence is Glycine--tRNA ligase alpha subunit (325 aa).

It belongs to the class-II aminoacyl-tRNA synthetase family. In terms of assembly, tetramer of two alpha and two beta subunits.

Its subcellular location is the cytoplasm. It catalyses the reaction tRNA(Gly) + glycine + ATP = glycyl-tRNA(Gly) + AMP + diphosphate. This is Glycine--tRNA ligase alpha subunit from Ralstonia nicotianae (strain ATCC BAA-1114 / GMI1000) (Ralstonia solanacearum).